We begin with the raw amino-acid sequence, 248 residues long: Pyridoxine 5'-phosphate synthase (248 aa).

Position 12 (Asn-12) interacts with 3-amino-2-oxopropyl phosphate. 14–15 is a binding site for 1-deoxy-D-xylulose 5-phosphate; that stretch reads DH. Residue Arg-23 participates in 3-amino-2-oxopropyl phosphate binding. His-48 acts as the Proton acceptor in catalysis. Residues Arg-50 and His-55 each contribute to the 1-deoxy-D-xylulose 5-phosphate site. Glu-75 acts as the Proton acceptor in catalysis. Thr-105 is a 1-deoxy-D-xylulose 5-phosphate binding site. His-196 functions as the Proton donor in the catalytic mechanism. 3-amino-2-oxopropyl phosphate is bound by residues Gly-197 and 218–219; that span reads GH.

This sequence belongs to the PNP synthase family. Homooctamer; tetramer of dimers.

Its subcellular location is the cytoplasm. It carries out the reaction 3-amino-2-oxopropyl phosphate + 1-deoxy-D-xylulose 5-phosphate = pyridoxine 5'-phosphate + phosphate + 2 H2O + H(+). It functions in the pathway cofactor biosynthesis; pyridoxine 5'-phosphate biosynthesis; pyridoxine 5'-phosphate from D-erythrose 4-phosphate: step 5/5. Catalyzes the complicated ring closure reaction between the two acyclic compounds 1-deoxy-D-xylulose-5-phosphate (DXP) and 3-amino-2-oxopropyl phosphate (1-amino-acetone-3-phosphate or AAP) to form pyridoxine 5'-phosphate (PNP) and inorganic phosphate. The polypeptide is Pyridoxine 5'-phosphate synthase (Pseudomonas paraeruginosa (strain DSM 24068 / PA7) (Pseudomonas aeruginosa (strain PA7))).